Consider the following 815-residue polypeptide: Polyribonucleotide nucleotidyltransferase (815 aa).

Mg(2+)-binding residues include Asp489 and Asp495. The 60-residue stretch at 556–615 (PRFYTLQIPTDKIRDLIGPGGKVIRGIVEATGVKIDVEDSGKVNVASSDQEAAKKALKMI) folds into the KH domain. An S1 motif domain is found at 625-692 (GKTYLGTVTR…DGNRIKLSRK (68 aa)). The interval 700–815 (AKMATEGGGD…GGGGGGRGRG (116 aa)) is disordered. The segment covering 723 to 734 (APGGVTFEGGYE) has biased composition (gly residues). Positions 735-745 (GGDEPEVEEGE) are enriched in acidic residues. Over residues 775–815 (PHGGGGGAGRGGRGRRPGGGGGGGRGGHGGRGGGGGGRGRG) the composition is skewed to gly residues.

It belongs to the polyribonucleotide nucleotidyltransferase family. Requires Mg(2+) as cofactor.

It is found in the cytoplasm. The enzyme catalyses RNA(n+1) + phosphate = RNA(n) + a ribonucleoside 5'-diphosphate. Functionally, involved in mRNA degradation. Catalyzes the phosphorolysis of single-stranded polyribonucleotides processively in the 3'- to 5'-direction. In Koribacter versatilis (strain Ellin345), this protein is Polyribonucleotide nucleotidyltransferase.